We begin with the raw amino-acid sequence, 897 residues long: MKLNIFTKSMIGMGLVCSALPALAMEAWNNQQGGNKYQVIFDGKIYENAWWVSSTNCPGKAKANDATNPWRLKRTATAAEISQFGNTLSCEKSGSSSSSNSNTPASNTPANGGSATPAQGTVPSNSSVVAWNKQQGGQTWYVVFNGAVYKNAWWVASSNCPGDAKSNDASNPWRYVRAATATEISETSNPQSCTSAPQPSPDVKPAPDVKPAPDVQPAPADKSNDNYAVVAWKGQEGSSTWYVIYNGGIYKNAWWVGAANCPGDAKENDASNPWRYVRAATATEISQYGNPGSCSVKPDNNGGAVTPVDPTPETPVTPTPDNSEPSTPADSVNDYSLQAWSGQEGSEIYHVIFNGNVYKNAWWVGSKDCPRGTSAENSNNPWRLERTATAAELSQYGNPTTCEIDNGGVIVADGFQASKAYSADSIVDYNDAHYKTSVDQDAWGFVPGGDNPWKKYEPAKAWSASTVYVKGDRVVVDGQAYEALFWTQSDNPALVANQNATGSNSRPWKPLGKAQSYSNEELNNAPQFNPETLYASDTLIRFNGVNYISQSKVQKVSPSDSNPWRVFVDWTGTKERVGTPKKAWPKHVYAPYVDFTLNTIPDLAALAKNHNVNHFTLAFVVSKDANTCLPTWGTAYGMQNYAQYSKIKALREAGGDVMLSIGGANNAPLAASCKNVDDLMQHYYDIVDNLNLKVLDFDIEGTWVADQASIERRNLAVKKVQDKWKSEGKDIAIWYTLPILPTGLTPEGMNVLSDAKAKGVELAGVNVMTMDYGNAICQSANTEGQNIHGKCATSAIANLHSQLKGLHPNKSDAEIDAMMGTTPMVGVNDVQGEVFYLSDARLVMQDAQKRNLGMVGIWSIARDLPGGTNLSPEFHGLTKEQAPKYAFSEIFAPFTKQ.

An N-terminal signal peptide occupies residues 1–24 (MKLNIFTKSMIGMGLVCSALPALA). Positions 25 to 91 (MEAWNNQQGG…SQFGNTLSCE (67 aa)) constitute a Chitin-binding type-3 1 domain. Disordered stretches follow at residues 90 to 127 (CEKS…SNSS), 182 to 222 (TEIS…PADK), and 287 to 333 (QYGN…DSVN). Over residues 95–111 (SSSSSNSNTPASNTPAN) the composition is skewed to low complexity. Polar residues-rich tracts occupy residues 113–127 (GSAT…SNSS) and 182–197 (TEIS…TSAP). The Chitin-binding type-3 2 domain maps to 128-194 (VVAWNKQQGG…SETSNPQSCT (67 aa)). Residues 198-216 (QPSPDVKPAPDVKPAPDVQ) show a composition bias toward pro residues. The Chitin-binding type-3 3 domain occupies 229–295 (VVAWKGQEGS…SQYGNPGSCS (67 aa)). Pro residues predominate over residues 309–318 (DPTPETPVTP). Positions 322–333 (NSEPSTPADSVN) are enriched in polar residues. 2 consecutive Chitin-binding type-3 domains span residues 337 to 403 (LQAW…TTCE) and 459 to 529 (AKAW…PQFN). One can recognise a GH18 domain in the interval 586-877 (KHVYAPYVDF…TNLSPEFHGL (292 aa)). Cysteines 628 and 673 form a disulfide. Residue E700 is the Proton donor of the active site.

Belongs to the glycosyl hydrolase 18 family. Chitinase class II subfamily.

The protein resides in the periplasm. The enzyme catalyses Random endo-hydrolysis of N-acetyl-beta-D-glucosaminide (1-&gt;4)-beta-linkages in chitin and chitodextrins.. It carries out the reaction Hydrolysis of (1-&gt;4)-beta-linkages between N-acetylmuramic acid and N-acetyl-D-glucosamine residues in a peptidoglycan and between N-acetyl-D-glucosamine residues in chitodextrins.. Bifunctional enzyme with lysozyme/chitinase activity. The sequence is that of Probable bifunctional chitinase/lysozyme (chiA) from Escherichia coli (strain K12).